The chain runs to 728 residues: Prolyl 3-hydroxylase 1 (728 aa).

Positions 1–14 (MVAVAAAAASRATA) are cleaved as a signal peptide. TPR repeat units lie at residues 25 to 58 (PDLL…RAAL), 135 to 168 (RSPY…NPEH), 197 to 230 (HMHE…YFVA), and 293 to 326 (PSHY…FPND). Asn308 carries an N-linked (GlcNAc...) asparagine glycan. Residues 393 to 431 (KRLQEKQKSERETAVRISQEIGNLMKEIETLVEEKTKES) are a coiled coil. 3 N-linked (GlcNAc...) asparagine glycosylation sites follow: Asn450, Asn459, and Asn532. In terms of domain architecture, Fe2OG dioxygenase spans 556 to 670 (SHLVCRTAIE…RCAIALWFTL (115 aa)). Residues His579, Asp581, and His651 each coordinate Fe cation. Residue Arg661 is part of the active site. The tract at residues 691–728 (SPEEVDLPQEQPLPDQQGSPKPGEESLSDRESQPKDEL) is disordered. Residues 698–707 (PQEQPLPDQQ) show a composition bias toward low complexity. A compositionally biased stretch (basic and acidic residues) spans 712-728 (PGEESLSDRESQPKDEL). The Prevents secretion from ER signature appears at 725-728 (KDEL).

The protein belongs to the leprecan family. Requires Fe cation as cofactor. L-ascorbate serves as cofactor. In terms of processing, O-glycosylated; chondroitin sulfate. In terms of tissue distribution, expressed in basement membranes of cardiac muscle, skeletal muscle, central nervous system, intestinal tract, trachea, ear, skin, liver and kidney. In kidney, localizes to the glomerular basement membrane, mesangial matrix and Bowman's capsule of the nephron. In the renal parenchyma, expressed in the basement membranes of tubules and blood vessels. In the ear and trachea, localizes to the perimeter of resident chondrocytes in lacunae.

The protein resides in the endoplasmic reticulum. It localises to the secreted. Its subcellular location is the extracellular space. The protein localises to the extracellular matrix. It carries out the reaction L-prolyl-[collagen] + 2-oxoglutarate + O2 = trans-3-hydroxy-L-prolyl-[collagen] + succinate + CO2. Functionally, basement membrane-associated chondroitin sulfate proteoglycan (CSPG). Has prolyl 3-hydroxylase activity catalyzing the post-translational formation of 3-hydroxyproline in -Xaa-Pro-Gly- sequences in collagens, especially types IV and V. May be involved in the secretory pathway of cells. Has growth suppressive activity in fibroblasts. The protein is Prolyl 3-hydroxylase 1 of Rattus norvegicus (Rat).